A 154-amino-acid polypeptide reads, in one-letter code: uncharacterized protein (154 aa).

The HTH marR-type domain occupies 7 to 143 (RSELEKTAVQ…IFSFVGKAAD (137 aa)). A DNA-binding region (H-T-H motif) is located at residues 57–80 (AGELGKKTGLSTGSVTALVDRLEK).

This is an uncharacterized protein from Bacillus subtilis (strain 168).